Here is a 205-residue protein sequence, read N- to C-terminus: uncharacterized protein (205 aa).

Residues 1-25 (MSNNNNEAQQPVESTNVESQQNVVQ) show a composition bias toward polar residues. The disordered stretch occupies residues 1-205 (MSNNNNEAQQ…TSDPAQQVEA (205 aa)). The segment covering 32-79 (NENNDNNNNNNNNNNNNNNNNNNNNNNNNSNNNNNSSNNENNENNENN) has biased composition (low complexity). The span at 80-122 (SCEKSEQEKPKEPEEPVQEEKSKEPCDQQKVKENEPAEEKETE) shows a compositional bias: basic and acidic residues. Low complexity-rich tracts occupy residues 123–132 (PAAPVEPENP) and 146–162 (QHQQQNHEPQQTSNGES). The span at 170–185 (SENKKRSIDEAGDIKD) shows a compositional bias: basic and acidic residues. A compositionally biased stretch (polar residues) spans 194–205 (VETSDPAQQVEA).

This is an uncharacterized protein from Dictyostelium discoideum (Social amoeba).